Here is a 65-residue protein sequence, read N- to C-terminus: Alpha-toxin Lqq4 (65 aa).

An LCN-type CS-alpha/beta domain is found at arginine 3–arginine 65. The specificity module, loop 1 stretch occupies residues aspartate 9–cysteine 13. Intrachain disulfides connect cysteine 13-cysteine 64, cysteine 17-cysteine 37, cysteine 23-cysteine 47, and cysteine 27-cysteine 49. Specificity module, loop regions lie at residues leucine 40–glycine 44 and proline 57–arginine 65. Arginine 65 carries the arginine amide modification.

Belongs to the long (4 C-C) scorpion toxin superfamily. Sodium channel inhibitor family. Alpha subfamily. Post-translationally, the recombinant toxin which is used for activity tests is not amidated. However, C-terminal amidation does not appear to play an important role in activity, since the non-amidated recombinant toxin and the native toxin (which is amidated) show similar activities on all sodium channels tested. Expressed by the venom gland.

Its subcellular location is the secreted. Functionally, alpha toxins bind voltage-independently at site-3 of sodium channels (Nav) and inhibit the inactivation of the activated channels, thereby blocking neuronal transmission. Both native and recombinant (non-amidated) toxins inhibit inactivation of Nav1.2/SCN2A (EC(50)=31.2-36.6 nM), Nav1.6/SCN8A (EC(50)=6.9-8.9 nM), and Nav1.7/SCN9A (EC(50)=182.0-260.1 nM). This is Alpha-toxin Lqq4 from Leiurus quinquestriatus quinquestriatus (Egyptian scorpion).